A 153-amino-acid polypeptide reads, in one-letter code: NAD(P)H-quinone oxidoreductase subunit N (153 aa).

This sequence belongs to the complex I NdhN subunit family. As to quaternary structure, NDH-1 can be composed of about 15 different subunits; different subcomplexes with different compositions have been identified which probably have different functions.

Its subcellular location is the cellular thylakoid membrane. It carries out the reaction a plastoquinone + NADH + (n+1) H(+)(in) = a plastoquinol + NAD(+) + n H(+)(out). It catalyses the reaction a plastoquinone + NADPH + (n+1) H(+)(in) = a plastoquinol + NADP(+) + n H(+)(out). Its function is as follows. NDH-1 shuttles electrons from an unknown electron donor, via FMN and iron-sulfur (Fe-S) centers, to quinones in the respiratory and/or the photosynthetic chain. The immediate electron acceptor for the enzyme in this species is believed to be plastoquinone. Couples the redox reaction to proton translocation, and thus conserves the redox energy in a proton gradient. Cyanobacterial NDH-1 also plays a role in inorganic carbon-concentration. The protein is NAD(P)H-quinone oxidoreductase subunit N of Synechococcus sp. (strain RCC307).